Here is a 457-residue protein sequence, read N- to C-terminus: MALKLFDSLTRNLRELQPSHPDGVFRFYNCGPTVYAPAHIGNFRTFVVNDILRRMLELEFGAPKVKHVRNLTDVDDKTIKRARDEGRPLADVTRQWTDKFHADCAALNCLPPHIEPTATGHIREQVDMIDCLMQKGNAYRAADGSVYFKVSSFSDYGRLSRVKERELQIGSALAGKSQAVDADEKEDGSDFALWKAHKPDDGENSWDSPWGRGRPGWHIECSAMSKKHLGETIDLHTGGVDLLFPHHENEIAQSECCNGVQFSRHWYHSEHLLVDGKKMSKSLGNLYTLDDLKQKGFSPMAVRYALLSGHPRKQLNFTLDSLHAAEKALATLRAYRATLAAGGAAHHVFAPVIAALEDDLNTPAALGALFTIVNRGKGEADVESFDRVMFALGLKLDAPTAPKAEVPAEVTALAEKRWAAKQAKDFATADALRKEIAAAGWSMLDRKDGYSLEPAKK.

Residue Cys-30 participates in Zn(2+) binding. Positions 32 to 42 (PTVYAPAHIGN) match the 'HIGH' region motif. Zn(2+) is bound by residues Cys-221, His-246, and Glu-250. A 'KMSKS' region motif is present at residues 278–282 (KMSKS). Lys-281 is an ATP binding site.

This sequence belongs to the class-I aminoacyl-tRNA synthetase family. Monomer. The cofactor is Zn(2+).

It localises to the cytoplasm. The catalysed reaction is tRNA(Cys) + L-cysteine + ATP = L-cysteinyl-tRNA(Cys) + AMP + diphosphate. This chain is Cysteine--tRNA ligase, found in Opitutus terrae (strain DSM 11246 / JCM 15787 / PB90-1).